We begin with the raw amino-acid sequence, 272 residues long: D-aminoacyl-tRNA deacylase (272 aa).

This sequence belongs to the DtdA deacylase family. In terms of assembly, monomer. Requires Zn(2+) as cofactor.

It carries out the reaction a D-aminoacyl-tRNA + H2O = a tRNA + a D-alpha-amino acid + H(+). The enzyme catalyses glycyl-tRNA(Ala) + H2O = tRNA(Ala) + glycine + H(+). Its function is as follows. D-aminoacyl-tRNA deacylase with broad substrate specificity. By recycling D-aminoacyl-tRNA to D-amino acids and free tRNA molecules, this enzyme counteracts the toxicity associated with the formation of D-aminoacyl-tRNA entities in vivo. The polypeptide is D-aminoacyl-tRNA deacylase (Thermococcus onnurineus (strain NA1)).